We begin with the raw amino-acid sequence, 947 residues long: Testis-expressed protein 11 (947 aa).

It belongs to the SPO22 family. Interacts with SYCP2. Interacts with PBXIP1; may prevent interaction between PBXIP1 and ESR2. Interacts with SHOC1. Interacts with REDIC1. In terms of tissue distribution, testis-specific.

The protein localises to the chromosome. Its function is as follows. Regulator of crossing-over during meiosis. Involved in initiation and/or maintenance of chromosome synapsis and formation of crossovers. In Mus musculus (Mouse), this protein is Testis-expressed protein 11 (Tex11).